The chain runs to 436 residues: 3-ketoacyl-CoA thiolase (436 aa).

The active-site Acyl-thioester intermediate is C99. Residues H392 and C422 each act as proton acceptor in the active site.

Belongs to the thiolase-like superfamily. Thiolase family. Heterotetramer of two alpha chains (FadJ) and two beta chains (FadI).

It localises to the cytoplasm. It carries out the reaction an acyl-CoA + acetyl-CoA = a 3-oxoacyl-CoA + CoA. It participates in lipid metabolism; fatty acid beta-oxidation. Functionally, catalyzes the final step of fatty acid oxidation in which acetyl-CoA is released and the CoA ester of a fatty acid two carbons shorter is formed. The polypeptide is 3-ketoacyl-CoA thiolase (Shewanella denitrificans (strain OS217 / ATCC BAA-1090 / DSM 15013)).